The following is a 170-amino-acid chain: Flavodoxin (170 aa).

The Flavodoxin-like domain occupies 4–165 (IGLFYGTQTG…RVKTWVSEIK (162 aa)).

It belongs to the flavodoxin family. The cofactor is FMN.

Its function is as follows. Low-potential electron donor to a number of redox enzymes. This Synechocystis sp. (strain ATCC 27184 / PCC 6803 / Kazusa) protein is Flavodoxin (isiB).